The primary structure comprises 426 residues: MPTELSDITIQSVLPCDYSLFKNNLRVSRLPESRFVFSPKEEINCQSLLQGPELKTALDNLNFIHKQKFEHQFRHGYWKLHPHPHHQHDSIIPASWIHDTPHMKLVFHRLQNLPDGDLLLENDPKNNVGYFISGGIAGIVSRTCTAPLDRLKVMLISDTGSKPSPKYPFATLLHTTKVLWNRNGIRSFFVGNGINVLKVMPESSIKFGTYEAMKRVLGISSSSENHSPLYSYLAGGMAGSVAQMFIYPVDTLKFRIQCSDLSRGQHGKSIILSNAKELYKSVGIRGYYRGVLVGILGMFPYSATDLGTFEGLKRTWIGILASRDNVDPQDVKLPNGLVMAFGALSGSTGATIVFPLNVIRTRLQTQGTSAHPATYDGFIDCFYKTTKNEGFRGLYKGLSPNLLKVAPSVAISYLVYENCKKWLGLE.

Solcar repeat units follow at residues 125 to 216 (KNNV…MKRV), 226 to 315 (HSPL…LKRT), and 334 to 422 (PNGL…CKKW). The next 6 helical transmembrane spans lie at 130-151 (YFISGGIAGIVSRTCTAPLDRL), 193-213 (GINVLKVMPESSIKFGTYEAM), 229-249 (LYSYLAGGMAGSVAQMFIYPV), 290-310 (GVLVGILGMFPYSATDLGTFE), 336-356 (GLVMAFGALSGSTGATIVFPL), and 394-415 (LYKGLSPNLLKVAPSVAISYLV).

This sequence belongs to the mitochondrial carrier (TC 2.A.29) family.

It localises to the mitochondrion inner membrane. This is an uncharacterized protein from Schizosaccharomyces pombe (strain 972 / ATCC 24843) (Fission yeast).